A 375-amino-acid polypeptide reads, in one-letter code: tRNA-specific 2-thiouridylase MnmA (375 aa).

Residues 20–27 and Leu-46 each bind ATP; that span reads AMSGGVDS. Cys-114 functions as the Nucleophile in the catalytic mechanism. A disulfide bridge connects residues Cys-114 and Cys-211. An ATP-binding site is contributed by Gly-138. The segment at 160-162 is interaction with tRNA; that stretch reads RDQ. Cys-211 (cysteine persulfide intermediate) is an active-site residue.

Belongs to the MnmA/TRMU family.

It localises to the cytoplasm. The enzyme catalyses S-sulfanyl-L-cysteinyl-[protein] + uridine(34) in tRNA + AH2 + ATP = 2-thiouridine(34) in tRNA + L-cysteinyl-[protein] + A + AMP + diphosphate + H(+). Its function is as follows. Catalyzes the 2-thiolation of uridine at the wobble position (U34) of tRNA, leading to the formation of s(2)U34. The polypeptide is tRNA-specific 2-thiouridylase MnmA (Ruegeria pomeroyi (strain ATCC 700808 / DSM 15171 / DSS-3) (Silicibacter pomeroyi)).